Here is a 185-residue protein sequence, read N- to C-terminus: MFFSNKTKEVKTIAKQDLFINDEIRVREVRLIGLEGEQLGIKPLSEAQALADNANVDLVLIQPQAKPPVAKIMDYGKFKFEYQKKQKEQRKKQSVVTVKEVRLSPTIDKGDFDTKLRNARKFLEKGNKVKVSIRFKGRMITHKEIGAKVLAEFAEATQDIAIIEQRAKMDGRQMFMQLAPATDKK.

Belongs to the IF-3 family. In terms of assembly, monomer.

Its subcellular location is the cytoplasm. Functionally, IF-3 binds to the 30S ribosomal subunit and shifts the equilibrium between 70S ribosomes and their 50S and 30S subunits in favor of the free subunits, thus enhancing the availability of 30S subunits on which protein synthesis initiation begins. In Streptococcus pneumoniae (strain Hungary19A-6), this protein is Translation initiation factor IF-3.